Consider the following 1858-residue polypeptide: MSLDPSSFPRSNSPASSDSSLTRSRLRGKEGSLKKDKNYRRYASSVERALSLFDNTLQEWADYISFLSRLLKALQTHPPDQPVVPHKVLVAKRLSQSMNPSLPSGVHQKALEVYTYIFNLIKPEGLSHDLPLYYPGIAPTLTFASLTVRPLFLSLVETYVCDLEPWAIRPALKAIILSLLPGLEEETSDDFDSTLRLLNTLREIASRMDTQRPGAETNSSGQYFWQCFFLASITSPSRRLGILAYLNRYLPKLGVTDRRPSRHEEVDATAMPLEMQVAVDSVILPEPGLLIRCFATGLTDEQVLVQRNFLDLLVTHLPLSSPILQTRITKDDLQRLIVAAAGVVSRRDMSLNRRLWAWLLGPDPVGDRASFEARPSISSTASKTAAESEELSQSQYFSRFGLQPLASGLLQLLKRDTELPSEKAKPFRITLSLMDRWEVGGHVVPAVFLPFMRSVKAYKLAAPKAHFDEVFRSATSFFDGVESGMIFSELLNLIDWDAKSLANDAPRILDNLNLAHFILDHFNVREEDMVLNHAPLLTLAALIKMSELSSEATTSVAHDQLQAVSNGLSKVVTLLTGLLIDRAFLRKSDSKNSVNEPSMLLDRPGSAILRQIHQFYDRSRNSLDLQPPPFPPTDLADLIIKNVYEQAISAVNACNDAKSIPERLNLLIVVLKKLPRSRILRDKRLYVAIGKHIQASTVELSTASFSHLSSMSTTITSLYCIHKLGYYITYEEVSDLIPPLVRQLWQFLSPLSPKFHVEAVRCLWNLHSVSWSDHLVESTITSLMFTPPAPGSYQLSSEEEAGRYFILWNHSHHGTYELPPKNLQDSAQSQASYHSSMLERPLFTVLDLLSQGSTQPAQVVQLWLQDLPSVAKVFRIIISKLEGVLHRGNQLGTFEGNTVVSPDDYAECNYLFETIHNVLGALNHNGWVSLLTQTMAHNSRRHDASASEDNAEAPSLHSVVFQASLKIVSGYKSGTATANAEEVKLQQISLLVMRQLLLGPGVEELVESGIDSLLVDRLYSMLDEGGDIAIQAALIDTLLAVLKARFSQAYLPPPPTKPKHQRGGSREKLTSPSLLSFTSDKPEKSSVLLPSPEPPQRLLDCLLKGLSSPRSRAIIDKWIMLLCEILPIYSTCIFQILLTLVDCLGREIRQSYTNLQSAFEKTEGWPKDRPEQTTISLLTGFETCIAAAHERLLMEEVNAPAAKSPDQTHGFFGNMVSGVFASDSNHPRSAAMNNRLTVLLSFQDAVRLCFSIWSWGAAERSSLPQDTESIASFQYTSLRMRNRSRRILEHLFTAEALECLETMVDMWIKSDRDTSPLIFNLLHTLDGSRPKIAIPAIFNAIYTRTNPAALDPSRKSTMTTALTETELAGFLVTYARSLDDDVLDEIWIDCTTFLRDVLSNPFPHRQILPRLVEFAAILGVKLENTNFGEDRRMRKELGDVILRLLTAIFTSKPMGFTQEQGLLGRASLDYDSSSIQRIGPDDMLSILVASMPAFSMTLGDMDRITTAVSNISTNIIGPFIRARLFPNNLNTSFMALMQHISKIPQVAKVWKKDVADAFNDPRFFGSQLDLVKGGWMTLLRQWALVDKDRLSEIMTRLTPPATAGIMFGVGASAARLDADRKAQLNLRRISLLVLSTAEDYFIAEMPALLQKLEDLLGATASSSPSSATRAEIFMVLRALILKSTTTTLSPFWPLINSELQEAISAISSGNQQELYNPYSLLQACKLLDTLLVLAPDDFQLLEWLYVTDTVDAIYPPEQFEPTALADEVSHNLGVRWSTSSDPTRESTNLHHGVRYPGLAADWIRETAKDEIVDRVLRPFFDQLSIHAFESTYSISNPNLEACRDDLLADLFNESTMAN.

Over residues 1–23 (MSLDPSSFPRSNSPASSDSSLTR) the composition is skewed to low complexity. 2 disordered regions span residues 1 to 33 (MSLD…EGSL) and 1052 to 1092 (PPPP…LPSP). The segment covering 1070 to 1079 (TSPSLLSFTS) has biased composition (polar residues). The segment at 1838 to 1854 (NLEACRDDLLADLFNES) is transactivation.

This sequence belongs to the DOP1 family.

It is found in the golgi apparatus membrane. Its function is as follows. Involved in cellular morphogenesis. Required for traffic between late Golgi and early endosomes, and for the normal structure and organization of the endoplasmic reticulum. During the vegetative phase, contributes to the highly polarized hyphal growth. Required for the reproductive cycle. Involved in conidiophore initiation and differentiation. May have a role in controlling the balance between vegetative proliferation and developmental morphogenesis. In Emericella nidulans (strain FGSC A4 / ATCC 38163 / CBS 112.46 / NRRL 194 / M139) (Aspergillus nidulans), this protein is Protein dop1 (dop1).